Consider the following 332-residue polypeptide: Leucine carboxyl methyltransferase 1 (332 aa).

Residues arginine 71, glycine 96, aspartate 120, 169 to 170 (DL), and glutamate 196 contribute to the S-adenosyl-L-methionine site.

The protein belongs to the methyltransferase superfamily. LCMT family.

The enzyme catalyses [phosphatase 2A protein]-C-terminal L-leucine + S-adenosyl-L-methionine = [phosphatase 2A protein]-C-terminal L-leucine methyl ester + S-adenosyl-L-homocysteine. In terms of biological role, methylates the carboxyl group of the C-terminal leucine residue of protein phosphatase 2A catalytic subunits to form alpha-leucine ester residues. The chain is Leucine carboxyl methyltransferase 1 (Lcmt1) from Rattus norvegicus (Rat).